Here is a 484-residue protein sequence, read N- to C-terminus: Suppressor of fused homolog (484 aa).

The tract at residues 1-21 (MAELRPSVAPGPAAPPASGPS) is disordered. Over residues 12 to 21 (PAAPPASGPS) the composition is skewed to pro residues. Lys-257 participates in a covalent cross-link: Glycyl lysine isopeptide (Lys-Gly) (interchain with G-Cter in ubiquitin). The segment at 279-360 (SRPPEDEEDS…SSTAIIPHEL (82 aa)) is disordered. At Ser-301 the chain carries Phosphoserine. Position 303 is an N6-acetyllysine (Lys-303). Residue Lys-321 forms a Glycyl lysine isopeptide (Lys-Gly) (interchain with G-Cter in SUMO2) linkage. The span at 336–347 (THDRAPSRKDSL) shows a compositional bias: basic and acidic residues. Phosphoserine occurs at positions 342, 346, and 352. Thr-353 carries the phosphothreonine modification. Ser-481 bears the Phosphoserine mark.

It belongs to the SUFU family. May form homodimers. Interacts with ULK3; inactivating the protein kinase activity of ULK3. Interacts with RAB23. Part of a DNA-bound corepressor complex containing SAP18, GLI1 and SIN3. Part of a complex containing CTNNB1. Binds BTRC, GLI2, GLI3, SAP18 and STK36. Binds both free and DNA-bound GLI1. Interacts with KIF7. Interacts with GLI3FL and this interaction regulates the formation of either repressor or activator forms of GLI3. Its association with GLI3FL is regulated by Hh signaling and dissociation of the SUFU-GLI3 interaction requires the presence of the ciliary motor KIF3A. Polyubiquitinated at Lys-257 by the SCF(FBXL17) complex, leading to its subsequent degradation and allowing the release of GLI1 for proper hedgehog/smoothened signal transduction. Ubiquitination is impaired by phosphorylation at Ser-342, Ser-346, Ser-352 and Thr-353. Post-translationally, phosphorylation at Ser-342, Ser-346, Ser-352 and Thr-353 prevents ubiquitination by the SCF(FBXL17) complex. In terms of tissue distribution, widely expressed in adult and fetal tissues.

Its subcellular location is the cytoplasm. The protein localises to the nucleus. In terms of biological role, negative regulator in the hedgehog/smoothened signaling pathway. Down-regulates GLI1-mediated transactivation of target genes. Part of a corepressor complex that acts on DNA-bound GLI1. May also act by linking GLI1 to BTRC and thereby targeting GLI1 to degradation by the proteasome. Sequesters GLI1, GLI2 and GLI3 in the cytoplasm, this effect is overcome by binding of STK36 to both SUFU and a GLI protein. Negative regulator of beta-catenin signaling. Regulates the formation of either the repressor form (GLI3R) or the activator form (GLI3A) of the full-length form of GLI3 (GLI3FL). GLI3FL is complexed with SUFU in the cytoplasm and is maintained in a neutral state. Without the Hh signal, the SUFU-GLI3 complex is recruited to cilia, leading to the efficient processing of GLI3FL into GLI3R. When Hh signaling is initiated, SUFU dissociates from GLI3FL and the latter translocates to the nucleus, where it is phosphorylated, destabilized, and converted to a transcriptional activator (GLI3A). Required for normal embryonic development. Required for the proper formation of hair follicles and the control of epidermal differentiation. The sequence is that of Suppressor of fused homolog from Mus musculus (Mouse).